The following is a 115-amino-acid chain: Hydrogenase maturation factor HypA (115 aa).

His-2 serves as a coordination point for Ni(2+). Zn(2+) contacts are provided by Cys-73, Cys-76, Cys-89, and Cys-92.

Belongs to the HypA/HybF family.

Involved in the maturation of [NiFe] hydrogenases. Required for nickel insertion into the metal center of the hydrogenase. This is Hydrogenase maturation factor HypA from Aquifex aeolicus (strain VF5).